The following is a 276-amino-acid chain: Bis(5'-nucleosyl)-tetraphosphatase, symmetrical (276 aa).

Belongs to the Ap4A hydrolase family.

The catalysed reaction is P(1),P(4)-bis(5'-adenosyl) tetraphosphate + H2O = 2 ADP + 2 H(+). In terms of biological role, hydrolyzes diadenosine 5',5'''-P1,P4-tetraphosphate to yield ADP. The protein is Bis(5'-nucleosyl)-tetraphosphatase, symmetrical of Psychromonas ingrahamii (strain DSM 17664 / CCUG 51855 / 37).